Consider the following 108-residue polypeptide: Hrp pili protein HrpA (108 aa).

Residues 41–56 (NTGSTDSIDATRSSIS) show a composition bias toward polar residues. The segment at 41-73 (NTGSTDSIDATRSSISKGDAKSAELDGTANEEN) is disordered.

The protein belongs to the HrpA type 1 family.

Its subcellular location is the secreted. The protein localises to the fimbrium. In terms of biological role, major structural protein of the hrp pilus, which is a component of the type III secretion system (T3SS, Hrp secretion system) required for effector protein delivery, parasitism, and pathogenicity. The hrp pilus functions as a conduit for protein delivery into the host cell. Also, affects the expression of T3SS-associated genes. Required for full expression of genes that encode regulatory, secretion, and effector proteins of the T3SS. HrpA-mediated gene regulation apparently is through effect on the mRNA level of HrpR and HrpS. The protein is Hrp pili protein HrpA (hrpA) of Pseudomonas syringae pv. syringae.